We begin with the raw amino-acid sequence, 621 residues long: Glutamyl-tRNA(Gln) amidotransferase subunit B, mitochondrial (621 aa).

Residues 1–41 (MARLPTTELRKYLLTGQFTRRGCLHLRPSPLAPPIPPLRTL) constitute a mitochondrion transit peptide. Disordered stretches follow at residues 26 to 86 (LRPS…DNQT) and 106 to 136 (SKLF…APFD). Low complexity-rich tracts occupy residues 38 to 57 (LRTL…QIIP) and 110 to 120 (SPASTPSSSSD).

It belongs to the GatB/GatE family. GatB subfamily. In terms of assembly, subunit of the heterotrimeric GatCAB amidotransferase (AdT) complex, composed of A, B and C subunits.

The protein localises to the mitochondrion. It carries out the reaction L-glutamyl-tRNA(Gln) + L-glutamine + ATP + H2O = L-glutaminyl-tRNA(Gln) + L-glutamate + ADP + phosphate + H(+). Functionally, allows the formation of correctly charged Gln-tRNA(Gln) through the transamidation of misacylated Glu-tRNA(Gln) in the mitochondria. The reaction takes place in the presence of glutamine and ATP through an activated gamma-phospho-Glu-tRNA(Gln). This Podospora anserina (strain S / ATCC MYA-4624 / DSM 980 / FGSC 10383) (Pleurage anserina) protein is Glutamyl-tRNA(Gln) amidotransferase subunit B, mitochondrial.